Consider the following 209-residue polypeptide: CASP-like protein 1B1 (209 aa).

The segment covering 1–10 has biased composition (basic and acidic residues); it reads MDLERGDKKP. The interval 1–39 is disordered; sequence MDLERGDKKPPPPPPPAPRTAAATTTTTTTPACSGKKRP. Topologically, residues 1-49 are cytoplasmic; that stretch reads MDLERGDKKPPPPPPPAPRTAAATTTTTTTPACSGKKRPPLRDSLVALQ. The span at 19–32 shows a compositional bias: low complexity; sequence RTAAATTTTTTTPA. A helical transmembrane segment spans residues 50-70; that stretch reads PVLLRAAAALAAAAAAAVMAL. Topologically, residues 71-100 are extracellular; it reads DAQSYTAVVAIVGTRPLTQTFTAKFSDTPA. The helical transmembrane segment at 101–121 threads the bilayer; sequence FVYFVIANAIAAAYNLLVLLV. Topologically, residues 122 to 134 are cytoplasmic; that stretch reads RRRRRTTAGLVVR. A helical transmembrane segment spans residues 135-155; the sequence is MLDMVVMALLATGAAAAASMA. The Extracellular portion of the chain corresponds to 156-180; the sequence is ELGRNGNARARWNPVCDRFGSFCRR. The chain crosses the membrane as a helical span at residues 181 to 201; it reads GGAALAASFVGVALMLALNLL. Residues 202 to 209 are Cytoplasmic-facing; sequence SAASGAGC.

The protein belongs to the Casparian strip membrane proteins (CASP) family. As to quaternary structure, homodimer and heterodimers.

It is found in the cell membrane. In Zea mays (Maize), this protein is CASP-like protein 1B1.